Reading from the N-terminus, the 292-residue chain is tRNA-cytidine(32) 2-sulfurtransferase (292 aa).

Residues Ser-53 to Ser-58 carry the PP-loop motif motif. Residues Cys-128, Cys-131, and Cys-219 each contribute to the [4Fe-4S] cluster site.

Belongs to the TtcA family. In terms of assembly, homodimer. Mg(2+) is required as a cofactor. It depends on [4Fe-4S] cluster as a cofactor.

It is found in the cytoplasm. The enzyme catalyses cytidine(32) in tRNA + S-sulfanyl-L-cysteinyl-[cysteine desulfurase] + AH2 + ATP = 2-thiocytidine(32) in tRNA + L-cysteinyl-[cysteine desulfurase] + A + AMP + diphosphate + H(+). It functions in the pathway tRNA modification. Catalyzes the ATP-dependent 2-thiolation of cytidine in position 32 of tRNA, to form 2-thiocytidine (s(2)C32). The sulfur atoms are provided by the cysteine/cysteine desulfurase (IscS) system. The polypeptide is tRNA-cytidine(32) 2-sulfurtransferase (Cereibacter sphaeroides (strain ATCC 17023 / DSM 158 / JCM 6121 / CCUG 31486 / LMG 2827 / NBRC 12203 / NCIMB 8253 / ATH 2.4.1.) (Rhodobacter sphaeroides)).